Reading from the N-terminus, the 241-residue chain is DNA repair protein RecO (241 aa).

Belongs to the RecO family.

Functionally, involved in DNA repair and RecF pathway recombination. This chain is DNA repair protein RecO, found in Rickettsia canadensis (strain McKiel).